The sequence spans 297 residues: GTP-binding protein REM 1 (297 aa).

Positions 1-10 are enriched in polar residues; that stretch reads MTLNTQQEAK. Positions 1–73 are disordered; the sequence is MTLNTQQEAK…DGWSSESSDS (73 aa). Ser51 carries the phosphoserine modification. Positions 64–73 are enriched in low complexity; it reads DGWSSESSDS. GTP contacts are provided by residues 87–94 and 194–197; these read GDPGVGKT and NKAD. The tract at residues 267–286 is calmodulin-binding; it reads ARRFLARLTARSARRRALKA.

It belongs to the small GTPase superfamily. RGK family. In terms of assembly, in vitro, interacts with calmodulin in a calcium-dependent manner. Interacts 14-3-3 family members including YWHAE, YWHAH, YWHAQ, YWHAZ in a phosphorylation-dependent manner. High expression in cardiac muscle. Moderate expression in lung, skeletal muscle and kidney. Low levels in spleen and brain.

Functionally, promotes endothelial cell sprouting and actin cytoskeletal reorganization. May be involved in angiogenesis. May function in Ca(2+) signaling. In Mus musculus (Mouse), this protein is GTP-binding protein REM 1 (Rem1).